Consider the following 431-residue polypeptide: Glucose-1-phosphate adenylyltransferase (431 aa).

Alpha-D-glucose 1-phosphate contacts are provided by residues tyrosine 109, glycine 175, 190 to 191 (EK), and serine 208.

Belongs to the bacterial/plant glucose-1-phosphate adenylyltransferase family. In terms of assembly, homotetramer.

It carries out the reaction alpha-D-glucose 1-phosphate + ATP + H(+) = ADP-alpha-D-glucose + diphosphate. It functions in the pathway glycan biosynthesis; glycogen biosynthesis. Functionally, involved in the biosynthesis of ADP-glucose, a building block required for the elongation reactions to produce glycogen. Catalyzes the reaction between ATP and alpha-D-glucose 1-phosphate (G1P) to produce pyrophosphate and ADP-Glc. The polypeptide is Glucose-1-phosphate adenylyltransferase (Alteromonas mediterranea (strain DSM 17117 / CIP 110805 / LMG 28347 / Deep ecotype)).